The sequence spans 288 residues: uncharacterized protein (288 aa).

The N-terminal stretch at 1–27 (MKFEFRTLVLISLAVVVVLSGCSQSPS) is a signal peptide. Positions 144–167 (GESGEAGGAGEQLPASDQASGEEP) are disordered.

This is an uncharacterized protein from Archaeoglobus fulgidus (strain ATCC 49558 / DSM 4304 / JCM 9628 / NBRC 100126 / VC-16).